Here is a 236-residue protein sequence, read N- to C-terminus: Purine nucleoside phosphorylase DeoD-type (236 aa).

His5 contributes to the a purine D-ribonucleoside binding site. Residues Gly21, Arg25, Arg44, and 88 to 91 each bind phosphate; that span reads RVGT. Residues 180-182 and 204-205 each bind a purine D-ribonucleoside; these read EME and SD. Asp205 (proton donor) is an active-site residue.

It belongs to the PNP/UDP phosphorylase family. As to quaternary structure, homohexamer; trimer of homodimers.

It carries out the reaction a purine D-ribonucleoside + phosphate = a purine nucleobase + alpha-D-ribose 1-phosphate. It catalyses the reaction a purine 2'-deoxy-D-ribonucleoside + phosphate = a purine nucleobase + 2-deoxy-alpha-D-ribose 1-phosphate. In terms of biological role, catalyzes the reversible phosphorolytic breakdown of the N-glycosidic bond in the beta-(deoxy)ribonucleoside molecules, with the formation of the corresponding free purine bases and pentose-1-phosphate. The chain is Purine nucleoside phosphorylase DeoD-type from Shewanella baltica (strain OS155 / ATCC BAA-1091).